The primary structure comprises 271 residues: Collectin-11 (271 aa).

The signal sequence occupies residues 1 to 25; that stretch reads MVGEKLVAYMLVSVLGLALLRSVFG. Residues 44 to 103 form the Collagen-like domain; sequence GEAGEKGEKGAPGRPGRVGPTGEQGPPGDKGQKGSPGRYGKMGPTGPKGLKGDMGDPGPK. Residues 46–112 form a disordered region; it reads AGEKGEKGAP…KGPNGEPGVP (67 aa). Residues 124-148 adopt a coiled-coil conformation; it reads EMDIQVVQLTNELKFIKNAVAGIKE. Residues 149 to 265 enclose the C-type lectin domain; it reads TDSKVYLLVK…CQLTMYFVCE (117 aa). Intrachain disulfides connect cysteine 170–cysteine 264 and cysteine 242–cysteine 256. Position 200 (arginine 200) interacts with a carbohydrate. Ca(2+) is bound by residues aspartate 207, glutamate 211, glutamate 232, asparagine 234, asparagine 235, aspartate 238, glutamate 240, and aspartate 241. Residue glutamate 240 coordinates a carbohydrate. Residues glutamate 244 and 252 to 254 contribute to the a carbohydrate site; that span reads IDV. Residue aspartate 253 coordinates Ca(2+).

The protein belongs to the COLEC10/COLEC11 family. Homotrimer; disulfide-linked. Interacts with MASP1; probably triggers the lectin pathway of complement.

The protein resides in the secreted. Lectin that plays a role in innate immunity, apoptosis and embryogenesis. Calcium-dependent lectin that binds self and non-self glycoproteins presenting high mannose oligosaccharides with at least one terminal alpha-1,2-linked mannose epitope. Primarily recognizes the terminal disaccharide of the glycan. Also recognizes a subset of fucosylated glycans and lipopolysaccharides. Plays a role in innate immunity through its ability to bind non-self sugars presented by microorganisms and to activate the complement through the recruitment of MAPS1. Also plays a role in apoptosis through its ability to bind in a calcium-independent manner the DNA present at the surface of apoptotic cells and to activate the complement in response to this binding. Finally, plays a role in development, probably serving as a guidance cue during the migration of neural crest cells and other cell types during embryogenesis. The polypeptide is Collectin-11 (colec11) (Danio rerio (Zebrafish)).